A 496-amino-acid chain; its full sequence is Glycerol kinase (496 aa).

Residue Thr11 coordinates ADP. ATP contacts are provided by Thr11, Thr12, and Ser13. Residue Thr11 participates in sn-glycerol 3-phosphate binding. Arg15 serves as a coordination point for ADP. Positions 81, 82, 133, and 242 each coordinate sn-glycerol 3-phosphate. Positions 81, 82, 133, 242, and 243 each coordinate glycerol. ADP contacts are provided by Thr264 and Gly307. Positions 264, 307, 311, and 408 each coordinate ATP. 2 residues coordinate ADP: Gly408 and Asn412.

The protein belongs to the FGGY kinase family.

The enzyme catalyses glycerol + ATP = sn-glycerol 3-phosphate + ADP + H(+). It participates in polyol metabolism; glycerol degradation via glycerol kinase pathway; sn-glycerol 3-phosphate from glycerol: step 1/1. With respect to regulation, inhibited by fructose 1,6-bisphosphate (FBP). Its function is as follows. Key enzyme in the regulation of glycerol uptake and metabolism. Catalyzes the phosphorylation of glycerol to yield sn-glycerol 3-phosphate. The protein is Glycerol kinase of Aromatoleum aromaticum (strain DSM 19018 / LMG 30748 / EbN1) (Azoarcus sp. (strain EbN1)).